A 118-amino-acid chain; its full sequence is NADH-ubiquinone oxidoreductase chain 3 (118 aa).

The next 3 membrane-spanning stretches (helical) occupy residues 9–29 (IYLVISLLVSLILLGVPFLFA), 62–82 (LVSILFIIFDLEVTFFFPWAV), and 87–107 (IDLFGFWSMMAFLLILFIGSL).

The protein belongs to the complex I subunit 3 family.

Its subcellular location is the mitochondrion membrane. It carries out the reaction a ubiquinone + NADH + 5 H(+)(in) = a ubiquinol + NAD(+) + 4 H(+)(out). Its function is as follows. Core subunit of the mitochondrial membrane respiratory chain NADH dehydrogenase (Complex I) that is believed to belong to the minimal assembly required for catalysis. Complex I functions in the transfer of electrons from NADH to the respiratory chain. The immediate electron acceptor for the enzyme is believed to be ubiquinone. This chain is NADH-ubiquinone oxidoreductase chain 3 (ND3), found in Zea mays (Maize).